The chain runs to 493 residues: Probable plastidic glucose transporter 2 (493 aa).

Positions 1-14 (MLGLQRETSSMYKR) are enriched in polar residues. A disordered region spans residues 1-24 (MLGLQRETSSMYKRTSSRDYSPMI). 12 helical membrane-spanning segments follow: residues 52-72 (LPHV…LGVV), 94-114 (LVVS…GGVA), 128-148 (LPMI…VMLL), 151-171 (FLVG…VTEV), 182-202 (SFIQ…GIPV), 211-231 (VCFW…FLCA), 293-313 (VVFI…NAVF), 329-349 (LGNI…MVLM), 356-376 (LLLL…VGAT), 392-412 (GTLV…GLLL), 424-444 (AMAF…LLFL), and 450-470 (LGPR…VMFV).

Belongs to the major facilitator superfamily. Sugar transporter (TC 2.A.1.1) family.

The protein resides in the plastid. The protein localises to the chloroplast membrane. Its function is as follows. May be involved in the efflux of glucose towards the cytosol. In Arabidopsis thaliana (Mouse-ear cress), this protein is Probable plastidic glucose transporter 2.